Consider the following 422-residue polypeptide: Serine--tRNA ligase (422 aa).

An L-serine-binding site is contributed by 230–232 (TAE). 261-263 (RNE) serves as a coordination point for ATP. Glu284 provides a ligand contact to L-serine. 347–350 (EVSS) contributes to the ATP binding site. Ser383 is a binding site for L-serine.

The protein belongs to the class-II aminoacyl-tRNA synthetase family. Type-1 seryl-tRNA synthetase subfamily. As to quaternary structure, homodimer. The tRNA molecule binds across the dimer.

Its subcellular location is the cytoplasm. It carries out the reaction tRNA(Ser) + L-serine + ATP = L-seryl-tRNA(Ser) + AMP + diphosphate + H(+). It catalyses the reaction tRNA(Sec) + L-serine + ATP = L-seryl-tRNA(Sec) + AMP + diphosphate + H(+). Its pathway is aminoacyl-tRNA biosynthesis; selenocysteinyl-tRNA(Sec) biosynthesis; L-seryl-tRNA(Sec) from L-serine and tRNA(Sec): step 1/1. Functionally, catalyzes the attachment of serine to tRNA(Ser). Is also able to aminoacylate tRNA(Sec) with serine, to form the misacylated tRNA L-seryl-tRNA(Sec), which will be further converted into selenocysteinyl-tRNA(Sec). This chain is Serine--tRNA ligase, found in Herpetosiphon aurantiacus (strain ATCC 23779 / DSM 785 / 114-95).